A 135-amino-acid chain; its full sequence is Ribonuclease P protein component (135 aa).

Belongs to the RnpA family. Consists of a catalytic RNA component (M1 or rnpB) and a protein subunit.

It catalyses the reaction Endonucleolytic cleavage of RNA, removing 5'-extranucleotides from tRNA precursor.. In terms of biological role, RNaseP catalyzes the removal of the 5'-leader sequence from pre-tRNA to produce the mature 5'-terminus. It can also cleave other RNA substrates such as 4.5S RNA. The protein component plays an auxiliary but essential role in vivo by binding to the 5'-leader sequence and broadening the substrate specificity of the ribozyme. This is Ribonuclease P protein component from Xylella fastidiosa (strain Temecula1 / ATCC 700964).